A 1631-amino-acid polypeptide reads, in one-letter code: ALK tyrosine kinase receptor (1631 aa).

The first 18 residues, 1–18, serve as a signal peptide directing secretion; it reads MGSVGLLGLLLLRLSVTA. Residues 19 to 1053 are Extracellular-facing; the sequence is SGSGAGTGSG…PHLPLSLVLS (1035 aa). The interval 20 to 53 is disordered; the sequence is GSGAGTGSGTGSGTGTGTGQLVGSPATGPALQPR. Positions 21 to 39 are enriched in gly residues; sequence SGAGTGSGTGSGTGTGTGQ. Residues 60–82 form a heparin-binding region region; it reads RLQRKSLAVDFVVPSLFRVYARD. N-linked (GlcNAc...) asparagine glycosylation is found at Asn-185, Asn-260, Asn-301, Asn-340, Asn-427, Asn-440, Asn-461, Asn-579, Asn-587, and Asn-643. Positions 280–443 constitute an MAM 1 domain; that stretch reads LECSFDFPCE…DFFALKNCSE (164 aa). An MAM 2 domain is found at 494–652; it reads FYCNFENGFC…NISISLDCYL (159 aa). An intrachain disulfide couples Cys-703 to Cys-716. Asn-724 carries an N-linked (GlcNAc...) asparagine glycan. The cysteines at positions 798 and 809 are disulfide-linked. N-linked (GlcNAc...) asparagine glycosylation is found at Asn-823, Asn-878, Asn-879, and Asn-901. Cysteines 921 and 943 form a disulfide. Asn-1001 carries an N-linked (GlcNAc...) asparagine glycan. 3 cysteine pairs are disulfide-bonded: Cys-1002-Cys-1010, Cys-1005-Cys-1021, and Cys-1023-Cys-1036. The tract at residues 1002-1040 is EGF-like; it reads CSHCEGDECHMDPESHKVICFCDHGTVLAEDGVSCIVSP. The chain crosses the membrane as a helical span at residues 1054–1074; it reads VVTSALVAALVLAFSGIMIVY. The Cytoplasmic segment spans residues 1075 to 1631; it reads RRKHQELQAM…DALLKTPPGP (557 aa). Residues 1131-1407 form the Protein kinase domain; it reads ITLIRGLGHG…IEYCTQDPDV (277 aa). Residues 1137–1145 and Lys-1165 contribute to the ATP site; that span reads LGHGAFGEV. The active-site Proton acceptor is the Asp-1264. Disordered stretches follow at residues 1423 to 1493, 1526 to 1554, and 1609 to 1631; these read EEKV…GHVN, WFTE…REGS, and FEGT…PPGP.

Homodimer; homodimerizes following heparin- and ligand-binding. Interacts with CBL, IRS1, PIK3R1 and PLCG1. Interacts with FRS2 and SHC1. Interacts with PTN and MDK. Phosphorylated at tyrosine residues by autocatalysis, which activates kinase activity. In cells not stimulated by a ligand, receptor protein tyrosine phosphatase beta and zeta complex (PTPRB/PTPRZ1) dephosphorylates ALK at the sites in ALK that are undergoing autophosphorylation through autoactivation.

It localises to the cell membrane. It carries out the reaction L-tyrosyl-[protein] + ATP = O-phospho-L-tyrosyl-[protein] + ADP + H(+). Activated upon ALKAL2 ligand-binding. ALKAL2-driven activation is coupled with heparin-binding. Following ligand-binding, homodimerizes and autophosphorylates, activating its kinase activity. Inactivated through dephosphorylation by receptor protein tyrosine phosphatase beta and zeta complex (PTPRB/PTPRZ1) when there is no stimulation by a ligand. Its function is as follows. Neuronal receptor tyrosine kinase that is essentially and transiently expressed in specific regions of the central and peripheral nervous systems and plays an important role in the genesis and differentiation of the nervous system. Also acts as a key thinness protein involved in the resistance to weight gain: in hypothalamic neurons, controls energy expenditure acting as a negative regulator of white adipose tissue lipolysis and sympathetic tone to fine-tune energy homeostasis. Following activation by ALKAL2 ligand at the cell surface, transduces an extracellular signal into an intracellular response. In contrast, ALKAL1 is not a potent physiological ligand for ALK. Ligand-binding to the extracellular domain induces tyrosine kinase activation, leading to activation of the mitogen-activated protein kinase (MAPK) pathway. Phosphorylates almost exclusively at the first tyrosine of the Y-x-x-x-Y-Y motif. Induces tyrosine phosphorylation of CBL, FRS2, IRS1 and SHC1, as well as of the MAP kinases MAPK1/ERK2 and MAPK3/ERK1. ALK activation may also be regulated by pleiotrophin (PTN) and midkine (MDK). PTN-binding induces MAPK pathway activation, which is important for the anti-apoptotic signaling of PTN and regulation of cell proliferation. MDK-binding induces phosphorylation of the ALK target insulin receptor substrate (IRS1), activates mitogen-activated protein kinases (MAPKs) and PI3-kinase, resulting also in cell proliferation induction. Drives NF-kappa-B activation, probably through IRS1 and the activation of the AKT serine/threonine kinase. Recruitment of IRS1 to activated ALK and the activation of NF-kappa-B are essential for the autocrine growth and survival signaling of MDK. This is ALK tyrosine kinase receptor from Canis lupus familiaris (Dog).